Reading from the N-terminus, the 548-residue chain is C2H2-type transcription factor MSN2 (548 aa).

2 C2H2-type zinc fingers span residues 420–448 (FKCE…QDKP) and 449–471 (FECN…ARTH).

In terms of assembly, interacts with HOG1/OSM1.

The protein localises to the nucleus. Its subcellular location is the cytoplasm. Functionally, transcription factor that acts as a key downstream transcription factor in the HOG1-MAPK pathway. Regulates the expression of a series of downstream genes and controls vegetative growth, conidiogenesis, cell wall integrity, stress response, mitochondrial morphology, and pathogenicity. Binds to a putative promoter region 1500 bp upstream of the start codons of the target genes MGG_07019, POX1 and DCI1. Binds to the AGGGG and CCCCT motif of the COS1 promoter region. Involved in fatty acid beta-oxidation by directly regulating the expression of the dienoyl-CoA isomerase DCI1, thereby facilitating invasive hyphal growth during the early infection stage. Targets also the 3-methylglutaconyl-CoA hydratase-encoding gene (AUH1) to control mitochondrial morphology and mitophagy, which are critical for the infectious growth of the pathogen. This Pyricularia oryzae (strain 70-15 / ATCC MYA-4617 / FGSC 8958) (Rice blast fungus) protein is C2H2-type transcription factor MSN2.